The chain runs to 82 residues: Small ribosomal subunit protein uS17 (82 aa).

It belongs to the universal ribosomal protein uS17 family. Part of the 30S ribosomal subunit.

One of the primary rRNA binding proteins, it binds specifically to the 5'-end of 16S ribosomal RNA. In Shewanella sediminis (strain HAW-EB3), this protein is Small ribosomal subunit protein uS17.